A 910-amino-acid chain; its full sequence is Dimethylsulfide dehydrogenase subunit alpha (910 aa).

A signal peptide (tat-type signal) is located at residues 1–28 (MLRTTRRTLMQGASLVGAGLFAAGRGWA). The 4Fe-4S Mo/W bis-MGD-type domain occupies 59–123 (DYVGKAAHCI…IHSTSMYEAD (65 aa)). The [4Fe-4S] cluster site is built by His66, Cys70, Cys74, and Cys109.

Belongs to the prokaryotic molybdopterin-containing oxidoreductase family. Heterotrimer of alpha, beta and gamma subunits. It depends on [4Fe-4S] cluster as a cofactor. Requires Mo-bis(molybdopterin guanine dinucleotide) as cofactor. In terms of processing, predicted to be exported by the Tat system. The position of the signal peptide cleavage has been experimentally proven.

Its subcellular location is the periplasm. The catalysed reaction is 2 Fe(III)-[cytochrome c2] + dimethyl sulfide + H2O = 2 Fe(II)-[cytochrome c2] + dimethyl sulfoxide + 2 H(+). Its function is as follows. Allows photoautotrophic growth on dimethyl sulfide (DMS) as the sole electron donor. This chain is Dimethylsulfide dehydrogenase subunit alpha (ddhA), found in Rhodovulum sulfidophilum (Rhodobacter sulfidophilus).